The chain runs to 446 residues: Histidine--tRNA ligase (446 aa).

Belongs to the class-II aminoacyl-tRNA synthetase family. Homodimer.

Its subcellular location is the cytoplasm. It carries out the reaction tRNA(His) + L-histidine + ATP = L-histidyl-tRNA(His) + AMP + diphosphate + H(+). In Burkholderia cenocepacia (strain HI2424), this protein is Histidine--tRNA ligase.